The sequence spans 609 residues: Replication protein A 70 kDa DNA-binding subunit (609 aa).

The interval 112-164 (IGNPHPYNDGQGPPQPAAPAPASAPPPSKPQNISAPPPPSMNRGASKLFGGGS) is disordered. Pro residues predominate over residues 124–151 (PPQPAAPAPASAPPPSKPQNISAPPPPS). Residues 189–273 (WTVRARVTNK…VKNDYEMTFN (85 aa)) constitute a DNA-binding region (OB). A C4-type zinc finger spans residues 472 to 494 (CPSQDCNKKVIDQQNGLFRCEKC).

This sequence belongs to the replication factor A protein 1 family. As to quaternary structure, component of the heterotrimeric canonical replication protein A complex (RPA). Interacts with rpain-a.

The protein resides in the nucleus. It is found in the PML body. Functionally, as part of the heterotrimeric replication protein A complex (RPA/RP-A), binds and stabilizes single-stranded DNA intermediates, that form during DNA replication or upon DNA stress. It prevents their reannealing and in parallel, recruits and activates different proteins and complexes involved in DNA metabolism. Thereby, it plays an essential role both in DNA replication and the cellular response to DNA damage. In Xenopus tropicalis (Western clawed frog), this protein is Replication protein A 70 kDa DNA-binding subunit (rpa1).